A 310-amino-acid chain; its full sequence is MNPLYQKHIISINDLSREELELVLDTAAKLKANPQPELLKHKVIASCFFEASTRTRLSFETSMHRLGASVVGFSDSSNTSLGKKGETLADTISVISTYVDAIVMRHPQEGAARLATEFSGGIPILNAGDGANQHPTQTLLDLFTIQETQGQLENLNIAMVGDLKYGRTVHSLAQALAKFNGNRFYFIAPTALAMPQYILDMLDEKGITWSQHASIEEVMGEVDILYMTRVQKERLDPSEYANVKAQFVLRASDLEGARTNMKVLHPLPRIDEIATDVDKTPHAWYFQQAGNGIFARQALLALVLNRELAL.

Carbamoyl phosphate contacts are provided by arginine 54 and threonine 55. Lysine 84 is an L-aspartate binding site. Residues arginine 105, histidine 134, and glutamine 137 each contribute to the carbamoyl phosphate site. Residues arginine 167 and arginine 229 each contribute to the L-aspartate site. Carbamoyl phosphate-binding residues include leucine 267 and proline 268.

Belongs to the aspartate/ornithine carbamoyltransferase superfamily. ATCase family. In terms of assembly, heterododecamer (2C3:3R2) of six catalytic PyrB chains organized as two trimers (C3), and six regulatory PyrI chains organized as three dimers (R2).

The catalysed reaction is carbamoyl phosphate + L-aspartate = N-carbamoyl-L-aspartate + phosphate + H(+). Its pathway is pyrimidine metabolism; UMP biosynthesis via de novo pathway; (S)-dihydroorotate from bicarbonate: step 2/3. Its function is as follows. Catalyzes the condensation of carbamoyl phosphate and aspartate to form carbamoyl aspartate and inorganic phosphate, the committed step in the de novo pyrimidine nucleotide biosynthesis pathway. The polypeptide is Aspartate carbamoyltransferase catalytic subunit (Enterobacter sp. (strain 638)).